The sequence spans 331 residues: UAP56-interacting factor (331 aa).

Positions 16–34 match the UAP56-binding motif motif; it reads APDKVDMSLDDIIRLNKKE. 3 disordered regions span residues 30–51, 63–99, and 158–193; these read LNKK…LQKG, RARG…RRRG, and GQRR…TQRE. Positions 166 to 175 are enriched in polar residues; the sequence is TDIQRGLNST.

Belongs to the UIF family.

Its subcellular location is the nucleus. The protein localises to the nucleoplasm. It localises to the nucleus speckle. Its function is as follows. Required for mRNA export from the nucleus to the cytoplasm. Acts as an adapter that uses the ddx39b/uap56-nfx1 pathway to ensure efficient mRNA export and delivering to the nuclear pore. This chain is UAP56-interacting factor (fyttd1), found in Salmo salar (Atlantic salmon).